The primary structure comprises 155 residues: Sec-independent protein translocase protein TatB (155 aa).

The helical transmembrane segment at 1 to 21 (MFGMGFFEILVVLVVAIIFLG) threads the bilayer. The disordered stretch occupies residues 109 to 155 (SLENNAPPKHLNKEVSNREVFHNEPPKEIELIANNNTTKHDKEKEHV). 2 stretches are compositionally biased toward basic and acidic residues: residues 119-138 (LNKE…KEIE) and 146-155 (TKHDKEKEHV).

The protein belongs to the TatB family. The Tat system comprises two distinct complexes: a TatABC complex, containing multiple copies of TatA, TatB and TatC subunits, and a separate TatA complex, containing only TatA subunits. Substrates initially bind to the TatABC complex, which probably triggers association of the separate TatA complex to form the active translocon.

Its subcellular location is the cell inner membrane. Part of the twin-arginine translocation (Tat) system that transports large folded proteins containing a characteristic twin-arginine motif in their signal peptide across membranes. Together with TatC, TatB is part of a receptor directly interacting with Tat signal peptides. TatB may form an oligomeric binding site that transiently accommodates folded Tat precursor proteins before their translocation. The sequence is that of Sec-independent protein translocase protein TatB from Helicobacter acinonychis (strain Sheeba).